Consider the following 67-residue polypeptide: DNA gyrase inhibitor YacG (67 aa).

4 residues coordinate Zn(2+): Cys-9, Cys-12, Cys-28, and Cys-32. A disordered region spans residues 46–67 (RIPSSGDLNDSDDWSEQPLDRQ).

It belongs to the DNA gyrase inhibitor YacG family. In terms of assembly, interacts with GyrB. Requires Zn(2+) as cofactor.

Functionally, inhibits all the catalytic activities of DNA gyrase by preventing its interaction with DNA. Acts by binding directly to the C-terminal domain of GyrB, which probably disrupts DNA binding by the gyrase. The chain is DNA gyrase inhibitor YacG from Erwinia tasmaniensis (strain DSM 17950 / CFBP 7177 / CIP 109463 / NCPPB 4357 / Et1/99).